A 206-amino-acid chain; its full sequence is Delta and osm-11 homolog protein 1 (206 aa).

The polypeptide is Delta and osm-11 homolog protein 1 (dos-1) (Caenorhabditis elegans).